The following is a 458-amino-acid chain: Adenylosuccinate synthetase (458 aa).

GTP is bound by residues 17-23 (GDEGKGK) and 45-47 (GHT). Asp-18 (proton acceptor) is an active-site residue. Mg(2+) contacts are provided by Asp-18 and Gly-45. Residues 18–21 (DEGK), 43–46 (NAGH), Thr-137, Arg-151, Gln-247, Thr-262, and Arg-330 each bind IMP. Residue His-46 is the Proton donor of the active site. 326–332 (VTTGRSR) contributes to the substrate binding site. Residues Arg-332, 358–360 (KLD), and 440–442 (STG) each bind GTP.

This sequence belongs to the adenylosuccinate synthetase family. As to quaternary structure, homodimer. Mg(2+) is required as a cofactor.

It localises to the cytoplasm. It catalyses the reaction IMP + L-aspartate + GTP = N(6)-(1,2-dicarboxyethyl)-AMP + GDP + phosphate + 2 H(+). It functions in the pathway purine metabolism; AMP biosynthesis via de novo pathway; AMP from IMP: step 1/2. Functionally, plays an important role in the de novo pathway of purine nucleotide biosynthesis. Catalyzes the first committed step in the biosynthesis of AMP from IMP. The polypeptide is Adenylosuccinate synthetase (Albidiferax ferrireducens (strain ATCC BAA-621 / DSM 15236 / T118) (Rhodoferax ferrireducens)).